The sequence spans 128 residues: Large ribosomal subunit protein eL31 (128 aa).

It belongs to the eukaryotic ribosomal protein eL31 family.

This Drosophila virilis (Fruit fly) protein is Large ribosomal subunit protein eL31 (RpL31).